Consider the following 268-residue polypeptide: E3 ubiquitin-protein ligase IAP-3 (268 aa).

2 BIR repeats span residues 18–84 and 111–178; these read KAAR…CPFV and EAAR…CEYV. Zn(2+) is bound by residues C148, C151, H168, and C175. An RING-type zinc finger spans residues 221–256; it reads CKICLGAEKTVCFVPCGHVVACGKCAAGVTTCPVCR.

Belongs to the IAP family. Post-translationally, auto-ubiquitinated.

It carries out the reaction S-ubiquitinyl-[E2 ubiquitin-conjugating enzyme]-L-cysteine + [acceptor protein]-L-lysine = [E2 ubiquitin-conjugating enzyme]-L-cysteine + N(6)-ubiquitinyl-[acceptor protein]-L-lysine.. Functionally, RING-finger E3 ubiquitin ligase required to prevent cellular apoptosis in infected cells. Ubiquitinates and subsequently targets host pro-apoptotic cellular proteins such as HID for degradation by the proteasome. This chain is E3 ubiquitin-protein ligase IAP-3 (IAP3), found in Orgyia pseudotsugata multicapsid polyhedrosis virus (OpMNPV).